The chain runs to 296 residues: Thioredoxin-related transmembrane protein 2 (296 aa).

The first 48 residues, 1 to 48 (MAVLAPLIALVYSVPRLSRWLAQPYYLLSALLSAAFLLVRKLPPLCHG), serve as a signal peptide directing secretion. At 49-102 (LPTQREDGNPCDFDWREVEILMFLSAIVMMKNRRSITVEQHIGNIFMFSKVANA) the chain is on the extracellular side. The helical transmembrane segment at 103-125 (ILFFRLDIRMGLLYITLCIVFLM) threads the bilayer. Positions 114 to 269 (LLYITLCIVF…LYQRAKKLSK (156 aa)) constitute a Thioredoxin domain. The Cytoplasmic portion of the chain corresponds to 126-296 (TCKPPLYMGP…VSDGESKKDK (171 aa)). S211, S243, and S288 each carry phosphoserine. Residues 269 to 296 (KAGDNIPEEQPVAPTPTRVSDGESKKDK) form a disordered region. The short motif at 293–296 (KKDK) is the Di-lysine motif element.

In terms of assembly, monomer. Homodimer; disulfide-linked. Occurs in both reduced and oxidized monomeric form. Oxidative conditions increase homodimerization. Interacts with CANX. Interacts with ATP2A2.

It localises to the endoplasmic reticulum membrane. It is found in the mitochondrion membrane. Its function is as follows. Endoplasmic reticulum and mitochondria-associated protein that probably functions as a regulator of cellular redox state and thereby regulates protein post-translational modification, protein folding and mitochondrial activity. Indirectly regulates neuronal proliferation, migration, and organization in the developing brain. The protein is Thioredoxin-related transmembrane protein 2 (TMX2) of Macaca fascicularis (Crab-eating macaque).